An 804-amino-acid chain; its full sequence is Leucine--tRNA ligase (804 aa).

The short motif at 40–51 (PYPSGAGLHVGH) is the 'HIGH' region element. The short motif at 576 to 580 (KMSKS) is the 'KMSKS' region element. Lys-579 lines the ATP pocket.

Belongs to the class-I aminoacyl-tRNA synthetase family.

It localises to the cytoplasm. The enzyme catalyses tRNA(Leu) + L-leucine + ATP = L-leucyl-tRNA(Leu) + AMP + diphosphate. This is Leucine--tRNA ligase from Staphylococcus epidermidis (strain ATCC 35984 / DSM 28319 / BCRC 17069 / CCUG 31568 / BM 3577 / RP62A).